Consider the following 378-residue polypeptide: Acetylornithine deacetylase (378 aa).

Histidine 76 contacts Zn(2+). The active site involves aspartate 78. Aspartate 108 is a Zn(2+) binding site. The active site involves glutamate 140. Residues glutamate 141, glutamate 165, and histidine 351 each contribute to the Zn(2+) site.

Belongs to the peptidase M20A family. ArgE subfamily. As to quaternary structure, homodimer. It depends on Zn(2+) as a cofactor. Co(2+) is required as a cofactor. Glutathione serves as cofactor.

Its subcellular location is the cytoplasm. It carries out the reaction N(2)-acetyl-L-ornithine + H2O = L-ornithine + acetate. Its pathway is amino-acid biosynthesis; L-arginine biosynthesis; L-ornithine from N(2)-acetyl-L-ornithine (linear): step 1/1. Catalyzes the hydrolysis of the amide bond of N(2)-acetylated L-amino acids. Cleaves the acetyl group from N-acetyl-L-ornithine to form L-ornithine, an intermediate in L-arginine biosynthesis pathway, and a branchpoint in the synthesis of polyamines. The polypeptide is Acetylornithine deacetylase (Aliivibrio salmonicida (strain LFI1238) (Vibrio salmonicida (strain LFI1238))).